The following is a 496-amino-acid chain: DNA-dependent metalloprotease SPRTN (496 aa).

Residue Met-1 is modified to N-acetylmethionine. In terms of domain architecture, SprT-like spans 45–212 (LQALFLQFND…KTCGGTYIKI (168 aa)). Zn(2+) is bound at residue His-111. Residue Glu-112 is part of the active site. 2 residues coordinate Zn(2+): His-115 and His-130. Lys-230 bears the N6-acetyllysine mark. Positions 253–261 (FSGKGYVLG) match the SHP-box motif. Phosphoserine is present on Ser-268. Lys-303 is covalently cross-linked (Glycyl lysine isopeptide (Lys-Gly) (interchain with G-Cter in SUMO2)). Positions 326 to 333 (QSVLSSYF) match the PIP-box motif. Lys-342 participates in a covalent cross-link: Glycyl lysine isopeptide (Lys-Gly) (interchain with G-Cter in SUMO2); alternate. Lys-342 participates in a covalent cross-link: Glycyl lysine isopeptide (Lys-Gly) (interchain with G-Cter in ubiquitin); alternate. The disordered stretch occupies residues 346–459 (NVNGSPVKSG…STPRSSGGQR (114 aa)). Lys-361 participates in a covalent cross-link: Glycyl lysine isopeptide (Lys-Gly) (interchain with G-Cter in SUMO2). The span at 382–403 (SSKVTAPASATVTSAAGTSAAI) shows a compositional bias: low complexity. Residue Ser-383 is modified to Phosphoserine. Positions 412–423 (DQFLNKRPRLED) match the Nuclear localization signal motif. Polar residues-rich tracts occupy residues 426-437 (ALNNIKEQTQSG) and 445-457 (RPTA…SSGG). Residue Lys-431 forms a Glycyl lysine isopeptide (Lys-Gly) (interchain with G-Cter in SUMO2) linkage. The UBZ4-type zinc-finger motif lies at 461 to 488 (LVNCPVCQGVVLESQINEHLDRCLEGSK). Cys-464, Cys-467, His-479, and Cys-483 together coordinate Zn(2+).

It belongs to the Spartan family. Homodimer. Interacts (VIA PIP-box) with PCNA (when ubiquitinated). Interacts (via its SHP-box) with VCP/p97. Interacts with RAD18. Interacts with KCTD13 and POLD3. Requires Zn(2+) as cofactor. Autocatalytically cleaved in response to double-stranded DNA-binding: autocatalytic cleavage takes place in trans and leads to inactivation. In terms of processing, monoubiquitinated; monoubiquitination promotes exclusion from chromatin. Deubiquitinated by VCPIP1: deubiquitination is required for subsequent acetylation and recruitment to chromatin and DNA damage sites. Post-translationally, acetylated following deubiquitination by VCPIP1, leading to recruitment to chromatin and DNA damage sites. Phosphorylation by CHEK1 promotes recruitment to chromatin.

It localises to the nucleus. The protein resides in the chromosome. With respect to regulation, DNA-binding activates the protease activity: single-stranded DNA-binding specifically activates ability to cleave covalent DNA-protein cross-links (DPCs). In contrast, double-stranded DNA-binding specifically activates autocatalytic cleavage, and subsequent inactivation. Its function is as follows. DNA-dependent metalloendopeptidase that mediates the proteolytic cleavage of covalent DNA-protein cross-links (DPCs) during DNA synthesis, thereby playing a key role in maintaining genomic integrity. DPCs are highly toxic DNA lesions that interfere with essential chromatin transactions, such as replication and transcription, and which are induced by reactive agents, such as UV light or formaldehyde. Associates with the DNA replication machinery and specifically removes DPCs during DNA synthesis. Catalyzes proteolytic cleavage of the HMCES DNA-protein cross-link following unfolding by the BRIP1/FANCJ helicase. Acts as a pleiotropic protease for DNA-binding proteins cross-linked with DNA, such as TOP1, TOP2A, histones H3 and H4. Mediates degradation of DPCs that are not ubiquitinated, while it is not able to degrade ubiquitinated DPCs. SPRTN activation requires polymerase collision with DPCs followed by helicase bypass of DPCs. Involved in recruitment of VCP/p97 to sites of DNA damage. Also acts as an activator of CHEK1 during normal DNA replication by mediating proteolytic cleavage of CHEK1, thereby promoting CHEK1 removal from chromatin and subsequent activation. Does not activate CHEK1 in response to DNA damage. May also act as a 'reader' of ubiquitinated PCNA: recruited to sites of UV damage and interacts with ubiquitinated PCNA and RAD18, the E3 ubiquitin ligase that monoubiquitinates PCNA. Facilitates chromatin association of RAD18 and is required for efficient PCNA monoubiquitination, promoting a feed-forward loop to enhance PCNA ubiquitination and translesion DNA synthesis. The protein is DNA-dependent metalloprotease SPRTN of Rattus norvegicus (Rat).